We begin with the raw amino-acid sequence, 203 residues long: RNA annealing protein YRA2 (203 aa).

Methionine 1 carries the post-translational modification N-acetylmethionine. Disordered stretches follow at residues methionine 1–proline 60 and glutamine 137–glycine 203. The segment covering asparagine 11 to histidine 20 has biased composition (polar residues). Residues serine 47–proline 60 show a composition bias toward basic and acidic residues. The RRM domain occupies lysine 64–proline 138. The segment covering glutamine 139 to glutamine 153 has biased composition (basic residues). The segment covering threonine 154–glycine 164 has biased composition (basic and acidic residues). Residues serine 165 to glycine 180 show a composition bias toward basic residues.

It belongs to the YRA1 family. As to quaternary structure, associates with mRNPs. Interacts with YRA1.

Its subcellular location is the nucleus. Functionally, involved in export of poly(A) mRNAs from the nucleus. Recruited to the coding sequences as well as poly-A sites of active genes. The sequence is that of RNA annealing protein YRA2 (YRA2) from Saccharomyces cerevisiae (strain YJM789) (Baker's yeast).